Here is a 444-residue protein sequence, read N- to C-terminus: Methylenetetrahydrofolate--tRNA-(uracil-5-)-methyltransferase TrmFO (444 aa).

9 to 14 (GAGMAG) contributes to the FAD binding site.

Belongs to the MnmG family. TrmFO subfamily. It depends on FAD as a cofactor.

It is found in the cytoplasm. It carries out the reaction uridine(54) in tRNA + (6R)-5,10-methylene-5,6,7,8-tetrahydrofolate + NADH + H(+) = 5-methyluridine(54) in tRNA + (6S)-5,6,7,8-tetrahydrofolate + NAD(+). The catalysed reaction is uridine(54) in tRNA + (6R)-5,10-methylene-5,6,7,8-tetrahydrofolate + NADPH + H(+) = 5-methyluridine(54) in tRNA + (6S)-5,6,7,8-tetrahydrofolate + NADP(+). Catalyzes the folate-dependent formation of 5-methyl-uridine at position 54 (M-5-U54) in all tRNAs. The sequence is that of Methylenetetrahydrofolate--tRNA-(uracil-5-)-methyltransferase TrmFO from Cereibacter sphaeroides (strain ATCC 17029 / ATH 2.4.9) (Rhodobacter sphaeroides).